A 419-amino-acid polypeptide reads, in one-letter code: MGEEKPEPLDFVKDFQEYLSQQTQHVNMISGSVIGVKDSDDLQGELAQNGLEHPAVDMSLEDSSGMLVDGFERTYDGKLKCRYCNYATRGTARLIEHIRIHTGEKPHRCHLCPFASAYERHLEAHMRSHTGEKPYKCELCSFRCSDRSNLSHHRRRRHKLLPMKGARSALSHRKMLSVLQKRGNSLGYGRRLLINLSPPSMVLQKPSSEQHHLGDFTHDLPPHAHLHQEAYNGLGKDPQAIGGAIGSGSREDQDMALDNPLNQLSTLAGQLASIPSEAEGAPVSPGAESLPDEKPTFLVQQPVTAPAAVSVNTAQASSPITPEPRPAAHSGCSPGVGPCSERTSTPSGTNSQPGTPTPVQDPQMLHHCPHCHIYFPDNILYTIHMGCHGYENPFQCNICGHRCRNSYDFACHFARGQHK.

C2H2-type zinc fingers lie at residues 79–101 (LKCR…IRIH), 107–129 (HRCH…MRSH), and 135–158 (YKCE…RRRH). 2 disordered regions span residues 203–255 (LQKP…DQDM) and 310–360 (SVNT…TPVQ). Basic and acidic residues predominate over residues 208–228 (SEQHHLGDFTHDLPPHAHLHQ). 2 stretches are compositionally biased toward polar residues: residues 310 to 320 (SVNTAQASSPI) and 341 to 360 (ERTS…TPVQ). 2 consecutive C2H2-type zinc fingers follow at residues 366–388 (HHCP…MGCH) and 394–418 (FQCN…RGQH).

It belongs to the Ikaros C2H2-type zinc-finger protein family. In terms of assembly, probably self-associates.

The protein resides in the nucleus. In terms of biological role, transcriptional repressor that binds the core 5'GNNTGTNG-3' DNA consensus sequence. In Danio rerio (Zebrafish), this protein is Zinc finger protein Pegasus (ikzf5).